The following is a 267-amino-acid chain: Tryptophan synthase alpha chain (267 aa).

Catalysis depends on proton acceptor residues E43 and D54.

Belongs to the TrpA family. In terms of assembly, tetramer of two alpha and two beta chains.

It carries out the reaction (1S,2R)-1-C-(indol-3-yl)glycerol 3-phosphate + L-serine = D-glyceraldehyde 3-phosphate + L-tryptophan + H2O. The protein operates within amino-acid biosynthesis; L-tryptophan biosynthesis; L-tryptophan from chorismate: step 5/5. Functionally, the alpha subunit is responsible for the aldol cleavage of indoleglycerol phosphate to indole and glyceraldehyde 3-phosphate. This Bacillus subtilis (strain 168) protein is Tryptophan synthase alpha chain.